Here is a 292-residue protein sequence, read N- to C-terminus: Probable 2-(5''-triphosphoribosyl)-3'-dephosphocoenzyme-A synthase (292 aa).

The protein belongs to the CitG/MdcB family.

The enzyme catalyses 3'-dephospho-CoA + ATP = 2'-(5''-triphospho-alpha-D-ribosyl)-3'-dephospho-CoA + adenine. Functionally, involved in the formation of 2-(5''-phosphoribosyl)-3'-dephosphocoenzyme-A, the prosthetic group of the acyl-carrier protein of the malonate decarboxylase. In Azotobacter vinelandii (strain DJ / ATCC BAA-1303), this protein is Probable 2-(5''-triphosphoribosyl)-3'-dephosphocoenzyme-A synthase.